Consider the following 833-residue polypeptide: Probable glucan 1,3-beta-glucosidase D (833 aa).

Positions 1–33 are enriched in basic and acidic residues; sequence MPTHSRSRDRYGGRDSDREARYDYDYARRRYAT. Positions 1–228 are disordered; it reads MPTHSRSRDR…RKRQKKLAVV (228 aa). The Cytoplasmic portion of the chain corresponds to 1 to 305; that stretch reads MPTHSRSRDR…GGRPFWKRKR (305 aa). Residues 34 to 45 are compositionally biased toward acidic residues; that stretch reads DDDDDYDDDELE. Basic and acidic residues-rich tracts occupy residues 46-75 and 97-172; these read HDLT…RDAE and YGDD…ETAA. Residues 183–196 are compositionally biased toward low complexity; it reads SASHLLSADALAKL. Over residues 200–217 the composition is skewed to basic and acidic residues; sequence YEKEERRKREIAKDAAKA. A helical; Signal-anchor for type II membrane protein membrane pass occupies residues 306-326; sequence WIGLGALIIILVIVIPVAVVV. Residues 327–833 lie on the Extracellular side of the membrane; sequence SKKHDNKSDP…PDFGDLPEYY (507 aa). The interval 331-353 is disordered; that stretch reads DNKSDPADSQGTSPGKSNLDGLS. Asn332 is a glycosylation site (N-linked (GlcNAc...) asparagine). A compositionally biased stretch (polar residues) spans 337–346; the sequence is ADSQGTSPGK. N-linked (GlcNAc...) asparagine glycans are attached at residues Asn378, Asn383, Asn395, Asn548, Asn560, and Asn569. The Proton donor role is filled by Glu599. N-linked (GlcNAc...) asparagine glycans are attached at residues Asn638, Asn671, and Asn691. Glu704 functions as the Nucleophile in the catalytic mechanism.

It belongs to the glycosyl hydrolase 5 (cellulase A) family.

The protein resides in the cell membrane. It catalyses the reaction Successive hydrolysis of beta-D-glucose units from the non-reducing ends of (1-&gt;3)-beta-D-glucans, releasing alpha-glucose.. In terms of biological role, glucosidase involved in the degradation of cellulosic biomass. Active on lichenan. This chain is Probable glucan 1,3-beta-glucosidase D (exgD), found in Aspergillus fumigatus (strain CBS 144.89 / FGSC A1163 / CEA10) (Neosartorya fumigata).